The primary structure comprises 456 residues: tRNA(Ile)-lysidine synthase (456 aa).

An ATP-binding site is contributed by 28–33 (SGGSDS).

This sequence belongs to the tRNA(Ile)-lysidine synthase family.

Its subcellular location is the cytoplasm. The enzyme catalyses cytidine(34) in tRNA(Ile2) + L-lysine + ATP = lysidine(34) in tRNA(Ile2) + AMP + diphosphate + H(+). Functionally, ligates lysine onto the cytidine present at position 34 of the AUA codon-specific tRNA(Ile) that contains the anticodon CAU, in an ATP-dependent manner. Cytidine is converted to lysidine, thus changing the amino acid specificity of the tRNA from methionine to isoleucine. This Brucella anthropi (strain ATCC 49188 / DSM 6882 / CCUG 24695 / JCM 21032 / LMG 3331 / NBRC 15819 / NCTC 12168 / Alc 37) (Ochrobactrum anthropi) protein is tRNA(Ile)-lysidine synthase.